A 197-amino-acid polypeptide reads, in one-letter code: Viral polyamine acetyltransferase (197 aa).

Asparagine 22 contacts acetyl-CoA. Residue glutamate 27 is part of the active site. The N-acetyltransferase domain maps to 102 to 182; it reads SYTPDDKCLY…YQYGITKPFD (81 aa). Positions 115, 117, 121, 123, 125, 126, 149, 150, and 159 each coordinate acetyl-CoA.

Belongs to the acetyltransferase family.

It catalyses the reaction spermine + acetyl-CoA = N(1)-acetylspermine + CoA + H(+). The catalysed reaction is spermidine + acetyl-CoA = N(1)-acetylspermidine + CoA + H(+). The enzyme catalyses spermidine + acetyl-CoA = N(8)-acetylspermidine + CoA + H(+). It carries out the reaction putrescine + acetyl-CoA = N-acetylputrescine + CoA + H(+). It catalyses the reaction cadaverine + acetyl-CoA = N-acetylcadaverine + CoA + H(+). The catalysed reaction is sym-homospermidine + acetyl-CoA = N(1)-acetyl-sym-homospermidine + CoA + H(+). Its function is as follows. Acetylates polyamines such as spermine, spermidine, cadaverine, homospermidine and putrescine (the latter with low efficiency). May play a role in the regulation of polyamine catabolism in the host during viral replication. This is Viral polyamine acetyltransferase from Chlorella (PBCV-1).